The following is a 453-amino-acid chain: Serine/threonine-protein phosphatase 2A 55 kDa regulatory subunit B delta isoform (453 aa).

WD repeat units lie at residues Ala32–Ala71, Glu97–Glu138, Ala181–Asn219, and Glu230–Arg270. Phosphoserine is present on Ser285. WD repeat units follow at residues Glu289–Glu327, Glu344–Leu385, and Asp420–Ile452. Tyr305 carries the phosphotyrosine modification. Thr308 is subject to Phosphothreonine. The tract at residues Leu385 to Gly406 is disordered.

The protein belongs to the phosphatase 2A regulatory subunit B family. PP2A consists of a common heterodimeric core enzyme, composed of a 36 kDa catalytic subunit (subunit C) and a 65 kDa constant regulatory subunit (PR65 or subunit A), that associates with a variety of regulatory subunits. Proteins that associate with the core dimer include three families of regulatory subunits B (the R2/B/PR55/B55, R3/B''/PR72/PR130/PR59 and R5/B'/B56 families), the 48 kDa variable regulatory subunit, viral proteins, and cell signaling molecules. Interacts with ENSA (when phosphorylated at 'Ser-67') and ARPP19 (when phosphorylated at 'Ser-62'), leading to inhibit PP2A activity. Interacts with IER5. Widely expressed with high levels in brain, heart, placenta, skeletal muscle, testis, thymus and spleen.

Its subcellular location is the cytoplasm. Its function is as follows. Substrate-recognition subunit of protein phosphatase 2A (PP2A) that plays a key role in cell cycle by controlling mitosis entry and exit. Involved in chromosome clustering during late mitosis by mediating dephosphorylation of MKI67. The activity of PP2A complexes containing PPP2R2D (PR55-delta) fluctuate during the cell cycle: the activity is high in interphase and low in mitosis. The polypeptide is Serine/threonine-protein phosphatase 2A 55 kDa regulatory subunit B delta isoform (Ppp2r2d) (Rattus norvegicus (Rat)).